Consider the following 279-residue polypeptide: Acetyl-coenzyme A carboxylase carboxyl transferase subunit beta (279 aa).

Residues 23-279 enclose the CoA carboxyltransferase N-terminal domain; sequence LWSKCDECGA…LIKLFKHLRG (257 aa). Zn(2+)-binding residues include Cys-27, Cys-30, Cys-46, and Cys-49. The segment at 27 to 49 adopts a C4-type zinc-finger fold; the sequence is CDECGAALHKKQLEDHLYTCPEC.

Belongs to the AccD/PCCB family. As to quaternary structure, acetyl-CoA carboxylase is a heterohexamer composed of biotin carboxyl carrier protein (AccB), biotin carboxylase (AccC) and two subunits each of ACCase subunit alpha (AccA) and ACCase subunit beta (AccD). Zn(2+) is required as a cofactor.

Its subcellular location is the cytoplasm. It catalyses the reaction N(6)-carboxybiotinyl-L-lysyl-[protein] + acetyl-CoA = N(6)-biotinyl-L-lysyl-[protein] + malonyl-CoA. Its pathway is lipid metabolism; malonyl-CoA biosynthesis; malonyl-CoA from acetyl-CoA: step 1/1. Functionally, component of the acetyl coenzyme A carboxylase (ACC) complex. Biotin carboxylase (BC) catalyzes the carboxylation of biotin on its carrier protein (BCCP) and then the CO(2) group is transferred by the transcarboxylase to acetyl-CoA to form malonyl-CoA. This chain is Acetyl-coenzyme A carboxylase carboxyl transferase subunit beta, found in Chlorobaculum parvum (strain DSM 263 / NCIMB 8327) (Chlorobium vibrioforme subsp. thiosulfatophilum).